Consider the following 195-residue polypeptide: Imidazole glycerol phosphate synthase subunit HisH (195 aa).

One can recognise a Glutamine amidotransferase type-1 domain in the interval 1–193 (MIAIVDYGVG…RETTCNSTQQ (193 aa)). Cys78 (nucleophile) is an active-site residue. Catalysis depends on residues His168 and Glu170.

As to quaternary structure, heterodimer of HisH and HisF.

The protein localises to the cytoplasm. The catalysed reaction is 5-[(5-phospho-1-deoxy-D-ribulos-1-ylimino)methylamino]-1-(5-phospho-beta-D-ribosyl)imidazole-4-carboxamide + L-glutamine = D-erythro-1-(imidazol-4-yl)glycerol 3-phosphate + 5-amino-1-(5-phospho-beta-D-ribosyl)imidazole-4-carboxamide + L-glutamate + H(+). It catalyses the reaction L-glutamine + H2O = L-glutamate + NH4(+). It participates in amino-acid biosynthesis; L-histidine biosynthesis; L-histidine from 5-phospho-alpha-D-ribose 1-diphosphate: step 5/9. In terms of biological role, IGPS catalyzes the conversion of PRFAR and glutamine to IGP, AICAR and glutamate. The HisH subunit catalyzes the hydrolysis of glutamine to glutamate and ammonia as part of the synthesis of IGP and AICAR. The resulting ammonia molecule is channeled to the active site of HisF. The sequence is that of Imidazole glycerol phosphate synthase subunit HisH from Exiguobacterium sibiricum (strain DSM 17290 / CCUG 55495 / CIP 109462 / JCM 13490 / 255-15).